A 312-amino-acid polypeptide reads, in one-letter code: Transcription initiation factor IIB-2 (312 aa).

The segment at 2–34 adopts a TFIIB-type zinc-finger fold; it reads SDAFCSDCKRHTEVVFDHSAGDTVCSECGLVLE. Residues cysteine 6, cysteine 9, cysteine 26, and cysteine 29 each contribute to the Zn(2+) site. Tandem repeats lie at residues 115-192 and 216-290.

The protein belongs to the TFIIB family. In terms of assembly, associates with TFIID-IIA (DA complex) to form TFIID-IIA-IIB (DAB-complex) which is then recognized by polymerase II.

The protein localises to the nucleus. In terms of biological role, general factor that plays a major role in the activation of eukaryotic genes transcribed by RNA polymerase II. The sequence is that of Transcription initiation factor IIB-2 (TFIIB2) from Arabidopsis thaliana (Mouse-ear cress).